A 230-amino-acid polypeptide reads, in one-letter code: Probable methylthioribulose-1-phosphate dehydratase (230 aa).

Cysteine 87 serves as a coordination point for substrate. Residues histidine 105 and histidine 107 each contribute to the Zn(2+) site. Catalysis depends on glutamate 129, which acts as the Proton donor/acceptor. Residue histidine 185 coordinates Zn(2+).

Belongs to the aldolase class II family. MtnB subfamily. Zn(2+) serves as cofactor.

The protein resides in the cytoplasm. It catalyses the reaction 5-(methylsulfanyl)-D-ribulose 1-phosphate = 5-methylsulfanyl-2,3-dioxopentyl phosphate + H2O. Its pathway is amino-acid biosynthesis; L-methionine biosynthesis via salvage pathway; L-methionine from S-methyl-5-thio-alpha-D-ribose 1-phosphate: step 2/6. Functionally, catalyzes the dehydration of methylthioribulose-1-phosphate (MTRu-1-P) into 2,3-diketo-5-methylthiopentyl-1-phosphate (DK-MTP-1-P). The protein is Probable methylthioribulose-1-phosphate dehydratase of Drosophila virilis (Fruit fly).